Here is a 581-residue protein sequence, read N- to C-terminus: Proline--tRNA ligase (581 aa).

Belongs to the class-II aminoacyl-tRNA synthetase family. ProS type 1 subfamily. As to quaternary structure, homodimer.

The protein localises to the cytoplasm. It carries out the reaction tRNA(Pro) + L-proline + ATP = L-prolyl-tRNA(Pro) + AMP + diphosphate. Functionally, catalyzes the attachment of proline to tRNA(Pro) in a two-step reaction: proline is first activated by ATP to form Pro-AMP and then transferred to the acceptor end of tRNA(Pro). As ProRS can inadvertently accommodate and process non-cognate amino acids such as alanine and cysteine, to avoid such errors it has two additional distinct editing activities against alanine. One activity is designated as 'pretransfer' editing and involves the tRNA(Pro)-independent hydrolysis of activated Ala-AMP. The other activity is designated 'posttransfer' editing and involves deacylation of mischarged Ala-tRNA(Pro). The misacylated Cys-tRNA(Pro) is not edited by ProRS. This chain is Proline--tRNA ligase, found in Azoarcus sp. (strain BH72).